A 526-amino-acid chain; its full sequence is Collagen alpha-2(I) chain (526 aa).

Positions 1–291 are disordered; it reads GFPGEKGPSG…PRSPPSLRPK (291 aa). Low complexity-rich tracts occupy residues 9–36, 44–81, and 110–131; these read SGEA…LGLP, LPGV…NGAP, and YPGN…SVGP. The span at 165–176 shows a compositional bias: basic and acidic residues; that stretch reads RGDKGEPGDKGP. A compositionally biased stretch (pro residues) spans 249 to 261; it reads AGPPGPPGPPGPP. A propeptide spans 263–526 (C-terminal propeptide); sequence ASGGGYDFGY…YVDVGPVCFK (264 aa). The Fibrillar collagen NC1 domain maps to 293–526; that stretch reads YEVDATLKSL…YVDVGPVCFK (234 aa). 3 disulfides stabilise this stretch: cysteine 323–cysteine 355, cysteine 363–cysteine 524, and cysteine 432–cysteine 477. Residues aspartate 341, asparagine 343, glutamine 344, cysteine 346, and aspartate 349 each coordinate Ca(2+).

Belongs to the fibrillar collagen family. Trimers of one alpha 2(I) and two alpha 1(I) chains. Interacts (via C-terminus) with TMEM131 (via PapD-L domain); the interaction is direct and is involved in assembly and TRAPPIII ER-to-Golgi transport complex-dependent secretion of collagen. In terms of processing, prolines at the third position of the tripeptide repeating unit (G-X-Y) are hydroxylated in some or all of the chains. As to expression, forms the fibrils of tendon, ligaments and bones. In bones the fibrils are mineralized with calcium hydroxyapatite.

It is found in the secreted. The protein localises to the extracellular space. The protein resides in the extracellular matrix. Its function is as follows. Type I collagen is a member of group I collagen (fibrillar forming collagen). The polypeptide is Collagen alpha-2(I) chain (COL1A2) (Oryctolagus cuniculus (Rabbit)).